The following is a 623-amino-acid chain: uncharacterized protein (623 aa).

5 helical membrane-spanning segments follow: residues 242–262 (IVLALTILALLLGLRKLITWL), 288–308 (IVSPVSVFLALFSCDVALDIF), 318–338 (VSMWVGAVYIMLLAWLVIALF), 361–381 (VINLILKVVYFLIFIVALLGV), and 387–407 (FNVSAIIASLGIGGLAVALAV).

It belongs to the MscS (TC 1.A.23) family.

The protein resides in the cell membrane. This is an uncharacterized protein from Helicobacter pylori (strain ATCC 700392 / 26695) (Campylobacter pylori).